The primary structure comprises 564 residues: Ferric reductase transmembrane component 1 (564 aa).

The N-linked (GlcNAc...) asparagine glycan is linked to Asn4. Transmembrane regions (helical) follow at residues 10–30 and 73–93; these read TVIAICLILGILLAFILMFWL and VILTLIAVPVVFAISIPFIGM. Asn111 carries N-linked (GlcNAc...) asparagine glycosylation. The helical transmembrane segment at 117–137 threads the bilayer; it reads VAARLGFLACGLYVTSYFFSI. One can recognise a Ferric oxidoreductase domain in the interval 121 to 254; it reads LGFLACGLYV…VYMKVCVAVY (134 aa). His157 and His171 together coordinate heme. The next 2 helical transmembrane spans lie at 160-180 and 193-213; these read LSQYAIMIGAIHGFAYIGLAA and IIGYVILGLMVIMIVSSLPFF. Heme-binding residues include His225 and His239. One can recognise an FAD-binding FR-type domain in the interval 255–410; that stretch reads VFDRGCRMLR…DGPYGPVSNP (156 aa). An N-linked (GlcNAc...) asparagine glycan is attached at Asn268. 317 to 323 is a binding site for FAD; sequence HPFTIAS. An N-linked (GlcNAc...) asparagine glycan is attached at Asn360. Residues Ser362, Ser381, and Ser383 each carry the phosphoserine modification. Residues 417–437 traverse the membrane as a helical segment; the sequence is LFLFAGGVGVSYILPIILDTI. Residue 419–427 coordinates NAD(+); it reads LFAGGVGVS. An N-linked (GlcNAc...) asparagine glycan is attached at Asn501.

This sequence belongs to the ferric reductase (FRE) family. Requires FAD as cofactor. Heme is required as a cofactor.

It localises to the cell membrane. The enzyme catalyses 2 a Fe(II)-siderophore + NADP(+) + H(+) = 2 a Fe(III)-siderophore + NADPH. Metalloreductase responsible for reducing extracellular iron and copper prior to import. Catalyzes the reductive uptake of Fe(3+)-salts and Fe(3+) bound to catecholate or hydroxamate siderophores. Fe(3+) is reduced to Fe(2+), which then dissociates from the siderophore and can be imported by the high-affinity Fe(2+) transport complex in the plasma membrane. Also participates in Cu(2+) reduction and Cu(+) uptake. This Schizosaccharomyces pombe (strain 972 / ATCC 24843) (Fission yeast) protein is Ferric reductase transmembrane component 1 (frp1).